A 466-amino-acid chain; its full sequence is Citrate synthase, mitochondrial (466 aa).

The transit peptide at 1–27 (MALLTAAARLLGAKNSSCLVLAARHAS) directs the protein to the mitochondrion. The SIFI-degron motif lies at 2-21 (ALLTAAARLLGAKNSSCLVL). K57 is subject to N6-succinyllysine. Position 76 is an N6-acetyllysine; alternate (K76). K76 is modified (N6-succinyllysine; alternate). 2 positions are modified to N6-succinyllysine: K103 and K193. At S226 the chain carries Phosphoserine. H301 is a catalytic residue. An N6-acetyllysine; alternate mark is found at K321 and K327. Residues K321 and K327 each carry the N6-succinyllysine; alternate modification. H347 is an active-site residue. R356 provides a ligand contact to oxaloacetate. K375 is modified (N6-acetyllysine; alternate). At K375 the chain carries N6-succinyllysine; alternate. K382 is modified (N6-acetyllysine). K393 carries the post-translational modification N6-acetyllysine; alternate. K393 is subject to N6-succinyllysine; alternate. K395 is subject to N6,N6,N6-trimethyllysine. Residue D402 is part of the active site. R428 and R448 together coordinate oxaloacetate. K450 carries the N6-succinyllysine modification. At K459 the chain carries N6-acetyllysine; alternate. Residue K459 is modified to N6-succinyllysine; alternate.

This sequence belongs to the citrate synthase family. Homodimer. Post-translationally, methylated. Trimethylation at Lys-395 by CSKMT decreases citrate synthase activity. In terms of processing, in response to mitochondrial stress, the precursor protein is ubiquitinated by the SIFI complex in the cytoplasm before mitochondrial import, leading to its degradation. Within the SIFI complex, UBR4 initiates ubiquitin chain that are further elongated or branched by KCMF1. In terms of tissue distribution, expressed in the head region and flagellum of epididymal sperm.

Its subcellular location is the mitochondrion matrix. It catalyses the reaction oxaloacetate + acetyl-CoA + H2O = citrate + CoA + H(+). It functions in the pathway carbohydrate metabolism; tricarboxylic acid cycle; isocitrate from oxaloacetate: step 1/2. Functionally, key enzyme of the Krebs tricarboxylic acid cycle which catalyzes the synthesis of citrate from acetyl coenzyme A and oxaloacetate. The chain is Citrate synthase, mitochondrial (Cs) from Rattus norvegicus (Rat).